Here is a 468-residue protein sequence, read N- to C-terminus: 3-isopropylmalate dehydratase large subunit (468 aa).

[4Fe-4S] cluster is bound by residues Cys349, Cys409, and Cys412.

Belongs to the aconitase/IPM isomerase family. LeuC type 1 subfamily. As to quaternary structure, heterodimer of LeuC and LeuD. The cofactor is [4Fe-4S] cluster.

It catalyses the reaction (2R,3S)-3-isopropylmalate = (2S)-2-isopropylmalate. The protein operates within amino-acid biosynthesis; L-leucine biosynthesis; L-leucine from 3-methyl-2-oxobutanoate: step 2/4. Its function is as follows. Catalyzes the isomerization between 2-isopropylmalate and 3-isopropylmalate, via the formation of 2-isopropylmaleate. This chain is 3-isopropylmalate dehydratase large subunit, found in Nitrobacter winogradskyi (strain ATCC 25391 / DSM 10237 / CIP 104748 / NCIMB 11846 / Nb-255).